Consider the following 158-residue polypeptide: SsrA-binding protein (158 aa).

It belongs to the SmpB family.

Its subcellular location is the cytoplasm. Functionally, required for rescue of stalled ribosomes mediated by trans-translation. Binds to transfer-messenger RNA (tmRNA), required for stable association of tmRNA with ribosomes. tmRNA and SmpB together mimic tRNA shape, replacing the anticodon stem-loop with SmpB. tmRNA is encoded by the ssrA gene; the 2 termini fold to resemble tRNA(Ala) and it encodes a 'tag peptide', a short internal open reading frame. During trans-translation Ala-aminoacylated tmRNA acts like a tRNA, entering the A-site of stalled ribosomes, displacing the stalled mRNA. The ribosome then switches to translate the ORF on the tmRNA; the nascent peptide is terminated with the 'tag peptide' encoded by the tmRNA and targeted for degradation. The ribosome is freed to recommence translation, which seems to be the essential function of trans-translation. The protein is SsrA-binding protein of Symbiobacterium thermophilum (strain DSM 24528 / JCM 14929 / IAM 14863 / T).